We begin with the raw amino-acid sequence, 178 residues long: Nicotinamide-nucleotide adenylyltransferase (178 aa).

Belongs to the archaeal NMN adenylyltransferase family.

It is found in the cytoplasm. It carries out the reaction beta-nicotinamide D-ribonucleotide + ATP + H(+) = diphosphate + NAD(+). The protein operates within cofactor biosynthesis; NAD(+) biosynthesis; NAD(+) from nicotinamide D-ribonucleotide: step 1/1. This Thermoplasma volcanium (strain ATCC 51530 / DSM 4299 / JCM 9571 / NBRC 15438 / GSS1) protein is Nicotinamide-nucleotide adenylyltransferase.